Here is a 204-residue protein sequence, read N- to C-terminus: MAHQGLLLVLSGPSGVGKGTVKSAMVKQKAFSFEYSVSMTTRKPRPGEVNGKDYYFVSEDRFQEAIKGNELLEYNEYVGNHYGTPLAPVQKMLNEGKDVLLEIDVNGAKQVRKLMPDGVFIFLTPPDLHELKHRIVNRGTDSDKVIAMRMKQARKEILMMEDYDYAVVNDTVANAVDHIKSIVEAEHVRVPRVINDYRNMVKED.

One can recognise a Guanylate kinase-like domain in the interval 5–184 (GLLLVLSGPS…AVDHIKSIVE (180 aa)). 12 to 19 (GPSGVGKG) contributes to the ATP binding site.

The protein belongs to the guanylate kinase family.

Its subcellular location is the cytoplasm. The catalysed reaction is GMP + ATP = GDP + ADP. Essential for recycling GMP and indirectly, cGMP. The sequence is that of Guanylate kinase from Lactobacillus johnsonii (strain CNCM I-12250 / La1 / NCC 533).